The sequence spans 347 residues: tRNA pseudouridine synthase D (347 aa).

D78 (nucleophile) is an active-site residue. The region spanning 150 to 304 is the TRUD domain; that stretch reads GLPNFFGPQR…AEGTRRAARL (155 aa).

This sequence belongs to the pseudouridine synthase TruD family.

The catalysed reaction is uridine(13) in tRNA = pseudouridine(13) in tRNA. Its function is as follows. Responsible for synthesis of pseudouridine from uracil-13 in transfer RNAs. This is tRNA pseudouridine synthase D from Anaeromyxobacter dehalogenans (strain 2CP-C).